A 363-amino-acid chain; its full sequence is MLKKTVLNAAHRAMNARMVDFGGWDMPVNYGSQIEEHNAVRNNCGMFDVSHMCPVDVVGADCRTFLSRLVANDVAKLKVSGKALYAAMLNEAGGVIDDLIIYFLTDTRFRIVVNAGTAEKDLAWMQAKVAEWKLDVTITQRRDGANNLGIIAVQGPNARAKVWEVLPQTKAATAGLKAFFAAEVDQYFIASTGYTGEDGYEIMMPAGEAEALWNKLNAAGVAPCGLGARDTLRLEAGMNLYGQDMDETVSPLDAGLAWTVSLNTDRDFVGKAALVTNGQQKQFLGLILLDKGVLRGHQKVMTKQGDGEITSGSFSPTLQQSIALARLPLGVQIGDEVEVDIRGKALKAKVTKPVFARNGKAVI.

It belongs to the GcvT family. In terms of assembly, the glycine cleavage system is composed of four proteins: P, T, L and H.

It catalyses the reaction N(6)-[(R)-S(8)-aminomethyldihydrolipoyl]-L-lysyl-[protein] + (6S)-5,6,7,8-tetrahydrofolate = N(6)-[(R)-dihydrolipoyl]-L-lysyl-[protein] + (6R)-5,10-methylene-5,6,7,8-tetrahydrofolate + NH4(+). Functionally, the glycine cleavage system catalyzes the degradation of glycine. The protein is Aminomethyltransferase of Dechloromonas aromatica (strain RCB).